We begin with the raw amino-acid sequence, 343 residues long: Dihydroorotase (343 aa).

2 residues coordinate Zn(2+): histidine 13 and histidine 15. Substrate contacts are provided by residues 15–17 (HLR) and asparagine 41. Residues lysine 99, histidine 136, and histidine 174 each contribute to the Zn(2+) site. The residue at position 99 (lysine 99) is an N6-carboxylysine. Histidine 136 contacts substrate. Residue leucine 219 coordinates substrate. Aspartate 247 contributes to the Zn(2+) binding site. Residue aspartate 247 is part of the active site. The substrate site is built by histidine 251 and alanine 263.

Belongs to the metallo-dependent hydrolases superfamily. DHOase family. Class II DHOase subfamily. As to quaternary structure, homodimer. Zn(2+) is required as a cofactor.

It catalyses the reaction (S)-dihydroorotate + H2O = N-carbamoyl-L-aspartate + H(+). It participates in pyrimidine metabolism; UMP biosynthesis via de novo pathway; (S)-dihydroorotate from bicarbonate: step 3/3. In terms of biological role, catalyzes the reversible cyclization of carbamoyl aspartate to dihydroorotate. In Shewanella sp. (strain ANA-3), this protein is Dihydroorotase.